The primary structure comprises 528 residues: Tubulin-specific chaperone E (528 aa).

The 45-residue stretch at 27-71 (GLVPPVAGLWLGVEWDNPERGKHDGSHEGTVYFKCRHPTAGSFIR) folds into the CAP-Gly domain. LRR repeat units follow at residues 152 to 176 (CPNI…DIAD), 178 to 206 (LKHL…TFPT), 207 to 229 (LKVL…ASGW), 231 to 253 (VLEK…DVLQ), 254 to 274 (TVKL…LFLI), 279 to 300 (RLEQ…DAGI), and 309 to 330 (SLQY…NELD). One can recognise an LRRCT domain in the interval 343–385 (NPLTEGSKDAQTTRQFIIARIGQLRTLNKCAIEPEERRGAELD). Lys-464 bears the N6-acetyllysine mark. The residue at position 496 (Ser-496) is a Phosphoserine.

The protein belongs to the TBCE family. In terms of assembly, supercomplex made of cofactors A to E. Cofactors A and D function by capturing and stabilizing tubulin in a quasi-native conformation. Cofactor E binds to the cofactor D-tubulin complex; interaction with cofactor C then causes the release of tubulin polypeptides that are committed to the native state. Cofactors B and E can form a heterodimer which binds to alpha-tubulin and enhances their ability to dissociate tubulin heterodimers. Interacts with TBCD.

The protein localises to the cytoplasm. The protein resides in the cytoskeleton. Tubulin-folding protein; involved in the second step of the tubulin folding pathway and in the regulation of tubulin heterodimer dissociation. Required for correct organization of microtubule cytoskeleton and mitotic splindle, and maintenance of the neuronal microtubule network. In Bos taurus (Bovine), this protein is Tubulin-specific chaperone E (TBCE).